A 104-amino-acid polypeptide reads, in one-letter code: Circadian clock oscillator protein KaiB (104 aa).

It belongs to the KaiB family. In terms of assembly, the KaiABC complex composition changes during the circadian cycle to control KaiC phosphorylation. Complexes KaiC(6), KaiA(2-4):KaiC(6), KaiB(6):KaiC(6) and KaiC(6):KaiB(6):KaiA(12) are among the most important forms, many form cooperatively. Undergoes a major conformational rearrangment; in the free state forms homotetramers as a dimer of dimers. When bound to the CI domain of KaiC switches to a monomeric thioredoxin-fold (KaiB(fs)). KaiB(fs) binds CikA, leading it to dephosphorylate phospho-RpaA.

Functionally, key component of the KaiABC oscillator complex, which constitutes the main circadian regulator in cyanobacteria. Complex composition changes during the circadian cycle to control KaiC phosphorylation. KaiA stimulates KaiC autophosphorylation, while KaiB sequesters KaiA, leading to KaiC autodephosphorylation. Phospho-Ser-431 KaiC accumulation triggers binding of KaiB to form the KaiB(6):KaiC(6) complex, leading to changes in output regulators CikA and SasA. KaiB switches to a thioredoxin-like fold (KaiB(fs)) when bound to KaiC. KaiB(6):KaiC(6) formation exposes a site for KaiA binding that sequesters KaiA from KaiC, making the KaiC(6):KaiB(6):KaiA(12) complex that results in KaiC autodephosphorylation. In terms of biological role, a metamorphic protein which reversibly switches between an inactive tetrameric fold and a rare, thioredoxin-like monomeric fold (KaiB(fs)). KaiB(fs) binds phospho-KaiC, KaiA and CikA. KaiA and CikA compete for binding to KaiB(fs), and KaiB(fs) and SasA compete for binding to KaiC, thus the clock oscillator and output signal pathway are tightly coupled. The polypeptide is Circadian clock oscillator protein KaiB (Nostoc punctiforme (strain ATCC 29133 / PCC 73102)).